The following is a 60-amino-acid chain: Large ribosomal subunit protein bL32 (60 aa).

The protein belongs to the bacterial ribosomal protein bL32 family.

This chain is Large ribosomal subunit protein bL32, found in Clostridium novyi (strain NT).